A 705-amino-acid chain; its full sequence is Calpain-1 catalytic subunit (705 aa).

The Calpain catalytic domain occupies 48–347; the sequence is LFRDPQFPAG…FSRLEICNLT (300 aa). Active-site residues include Cys-108, His-265, and Asn-289. Residues 348 to 517 are domain III; it reads PDALTKDELS…KQSDTAELDE (170 aa). Positions 518–533 are linker; that stretch reads EISADLADEEEITEDD. The 36-residue stretch at 530-565 folds into the EF-hand 1 domain; it reads TEDDIEDGFKNMFQQLAGEDMEISVFELKTILNRVI. The segment at 534 to 704 is domain IV; sequence IEDGFKNMFQ…LAEWLLLTMC (171 aa). The Ca(2+) site is built by Asp-549, Glu-551, Glu-556, Asp-589, Asp-591, Ser-593, Arg-595, Glu-600, Asp-619, Asp-621, Ser-623, Thr-625, and Glu-630. 2 consecutive EF-hand domains span residues 606–641 and 671–705; these read NKIR…AGFK and VKLE…TMCG.

This sequence belongs to the peptidase C2 family. In terms of assembly, heterodimer of large (catalytic) and a small (regulatory) subunit. Ca(2+) is required as a cofactor. The N-terminus is blocked. Ubiquitously expressed.

It is found in the cytoplasm. The protein localises to the cell membrane. The catalysed reaction is Broad endopeptidase specificity.. Its activity is regulated as follows. Activated by micromolar concentrations of calcium and inhibited by calpastatin. Its function is as follows. Calcium-regulated non-lysosomal thiol-protease which catalyze limited proteolysis of substrates involved in cytoskeletal remodeling and signal transduction. In Gallus gallus (Chicken), this protein is Calpain-1 catalytic subunit.